The primary structure comprises 128 residues: MSSQLISLVNTDRIIGKHVFGNLYDIDPKILNDKDFLHNLVLEAVKIANMKLVEIKSWNFGGKKGGVSVIALVEESHIALHTWTEYNYATLDVYTCGENSNPQAAFEYIVSQLKPKRYQMFYADRSSE.

The Schiff-base intermediate with substrate; via pyruvic acid role is filled by serine 76. At serine 76 the chain carries Pyruvic acid (Ser); by autocatalysis. The active-site Proton acceptor; for processing activity is histidine 81. The Proton donor; for catalytic activity role is filled by cysteine 96.

It belongs to the prokaryotic AdoMetDC family. Type 1 subfamily. As to quaternary structure, heterooctamer of four alpha and four beta chains arranged as a tetramer of alpha/beta heterodimers. Pyruvate is required as a cofactor. Is synthesized initially as an inactive proenzyme. Formation of the active enzyme involves a self-maturation process in which the active site pyruvoyl group is generated from an internal serine residue via an autocatalytic post-translational modification. Two non-identical subunits are generated from the proenzyme in this reaction, and the pyruvate is formed at the N-terminus of the alpha chain, which is derived from the carboxyl end of the proenzyme. The post-translation cleavage follows an unusual pathway, termed non-hydrolytic serinolysis, in which the side chain hydroxyl group of the serine supplies its oxygen atom to form the C-terminus of the beta chain, while the remainder of the serine residue undergoes an oxidative deamination to produce ammonia and the pyruvoyl group blocking the N-terminus of the alpha chain.

It catalyses the reaction L-arginine + H(+) = agmatine + CO2. The protein operates within amine and polyamine biosynthesis; agmatine biosynthesis; agmatine from L-arginine: step 1/1. Specifically catalyzes the decarboxylation of L-arginine to agmatine. Has no S-adenosylmethionine decarboxylase (AdoMetDC) activity. This Sulfurisphaera tokodaii (strain DSM 16993 / JCM 10545 / NBRC 100140 / 7) (Sulfolobus tokodaii) protein is Arginine decarboxylase proenzyme.